The following is a 160-amino-acid chain: uncharacterized protein (160 aa).

The chain crosses the membrane as a helical span at residues 47–67 (LLGGFANVAAILTPLVAVLAY).

The protein resides in the membrane. This is an uncharacterized protein from Sinorhizobium fredii (strain NBRC 101917 / NGR234).